A 58-amino-acid chain; its full sequence is Metallothionein-1 (58 aa).

The interval 1–28 (PGPCCNDKCVCKEGGCKEGCQCTSCRCS) is beta. Cys4, Cys5, Cys9, Cys11, Cys16, Cys20, Cys22, Cys25, Cys27, Cys30, Cys33, Cys37, Cys39, Cys45, Cys49, Cys53, Cys55, and Cys56 together coordinate a divalent metal cation. The segment at 29–58 (PCEKCSSGCKCANKEECSKTCSKACSCCPT) is alpha.

This sequence belongs to the metallothionein superfamily. Type 3 family.

Functionally, metallothioneins have a high content of cysteine residues that bind various heavy metals. Class I MTS in marine crustacea are involved in the sequestration of elevated levels of heavy-metal ions. The sequence is that of Metallothionein-1 from Scylla serrata (Mud crab).